The primary structure comprises 479 residues: Ribosomal RNA small subunit methyltransferase F (479 aa).

Residues 125-131, E149, D176, and D194 contribute to the S-adenosyl-L-methionine site; that span reads AAAPGSK. The active-site Nucleophile is C247.

It belongs to the class I-like SAM-binding methyltransferase superfamily. RsmB/NOP family.

The protein localises to the cytoplasm. The catalysed reaction is cytidine(1407) in 16S rRNA + S-adenosyl-L-methionine = 5-methylcytidine(1407) in 16S rRNA + S-adenosyl-L-homocysteine + H(+). Its function is as follows. Specifically methylates the cytosine at position 1407 (m5C1407) of 16S rRNA. In Shigella sonnei (strain Ss046), this protein is Ribosomal RNA small subunit methyltransferase F.